The chain runs to 674 residues: DNA ligase (674 aa).

NAD(+)-binding positions include 42 to 46, 91 to 92, and E121; these read DNVYD and SM. The active-site N6-AMP-lysine intermediate is the K123. NAD(+) is bound by residues R144, E178, K294, and K318. Zn(2+)-binding residues include C412, C415, C430, and C435. A BRCT domain is found at 596–674; that stretch reads VKDSFVAGKT…ETELLANLKD (79 aa).

It belongs to the NAD-dependent DNA ligase family. LigA subfamily. It depends on Mg(2+) as a cofactor. Requires Mn(2+) as cofactor.

It catalyses the reaction NAD(+) + (deoxyribonucleotide)n-3'-hydroxyl + 5'-phospho-(deoxyribonucleotide)m = (deoxyribonucleotide)n+m + AMP + beta-nicotinamide D-nucleotide.. Its function is as follows. DNA ligase that catalyzes the formation of phosphodiester linkages between 5'-phosphoryl and 3'-hydroxyl groups in double-stranded DNA using NAD as a coenzyme and as the energy source for the reaction. It is essential for DNA replication and repair of damaged DNA. The polypeptide is DNA ligase (Lacticaseibacillus casei (strain BL23) (Lactobacillus casei)).